Reading from the N-terminus, the 399-residue chain is Polypyrimidine tract-binding protein homolog 1 (399 aa).

Serine 2 carries the post-translational modification N-acetylserine. RRM domains lie at 17-95, 109-196, and 242-322; these read KVVH…YSNR, GNVL…YSAH, and SNVL…YSRH. The interval 352–399 is disordered; the sequence is AVSGSAPPAGWQNPQAQSQYSGYGGSPYMYPSSDPNGASPSGQPPYYG. The segment covering 365–384 has biased composition (low complexity); that stretch reads PQAQSQYSGYGGSPYMYPSS.

It localises to the nucleus. Functionally, plays a role in pre-mRNA splicing. Binds to the polypyrimidine tract of introns. May promote the binding of U2 snRNP to pre-mRNA. In Arabidopsis thaliana (Mouse-ear cress), this protein is Polypyrimidine tract-binding protein homolog 1 (PTB).